The sequence spans 218 residues: 3,4-dihydroxy-2-butanone 4-phosphate synthase (218 aa).

D-ribulose 5-phosphate-binding positions include 38-39 (RE), aspartate 43, 151-155 (RRGHT), and glutamate 175. Position 39 (glutamate 39) interacts with Mg(2+). Residue histidine 154 participates in Mg(2+) binding.

This sequence belongs to the DHBP synthase family. Homodimer. Mg(2+) serves as cofactor. It depends on Mn(2+) as a cofactor.

It carries out the reaction D-ribulose 5-phosphate = (2S)-2-hydroxy-3-oxobutyl phosphate + formate + H(+). It functions in the pathway cofactor biosynthesis; riboflavin biosynthesis; 2-hydroxy-3-oxobutyl phosphate from D-ribulose 5-phosphate: step 1/1. In terms of biological role, catalyzes the conversion of D-ribulose 5-phosphate to formate and 3,4-dihydroxy-2-butanone 4-phosphate. This is 3,4-dihydroxy-2-butanone 4-phosphate synthase from Vibrio vulnificus (strain CMCP6).